Reading from the N-terminus, the 277-residue chain is Large ribosomal subunit protein uL2 (277 aa).

The tract at residues 215 to 263 (LGRKPHQRGSAMNPVDHPHGGGEGRTGAGRVPVSPWGQPAKGLKTRKKR) is disordered.

This sequence belongs to the universal ribosomal protein uL2 family. As to quaternary structure, part of the 50S ribosomal subunit. Forms a bridge to the 30S subunit in the 70S ribosome.

Functionally, one of the primary rRNA binding proteins. Required for association of the 30S and 50S subunits to form the 70S ribosome, for tRNA binding and peptide bond formation. It has been suggested to have peptidyltransferase activity; this is somewhat controversial. Makes several contacts with the 16S rRNA in the 70S ribosome. The protein is Large ribosomal subunit protein uL2 of Deinococcus geothermalis (strain DSM 11300 / CIP 105573 / AG-3a).